A 331-amino-acid polypeptide reads, in one-letter code: Protein-methionine-sulfoxide reductase catalytic subunit MsrP (331 aa).

A signal peptide (tat-type signal) is located at residues 1 to 54; that stretch reads MLIKTDRWLRGDDIPASEITPQHLFDQRRRLLAAAALGAAGAALSPWAARRAFA. Mo-molybdopterin is bound by residues Asn86, 89–90, Cys144, Ser179, Asn227, Arg232, and 243–245; these read YE and SAK.

It belongs to the MsrP family. As to quaternary structure, heterodimer of a catalytic subunit (MsrP) and a heme-binding subunit (MsrQ). Mo-molybdopterin serves as cofactor. Predicted to be exported by the Tat system. The position of the signal peptide cleavage has not been experimentally proven.

The protein resides in the periplasm. It carries out the reaction L-methionyl-[protein] + a quinone + H2O = L-methionyl-(S)-S-oxide-[protein] + a quinol. It catalyses the reaction L-methionyl-[protein] + a quinone + H2O = L-methionyl-(R)-S-oxide-[protein] + a quinol. Its function is as follows. Part of the MsrPQ system that repairs oxidized periplasmic proteins containing methionine sulfoxide residues (Met-O), using respiratory chain electrons. Thus protects these proteins from oxidative-stress damage caused by reactive species of oxygen and chlorine generated by the host defense mechanisms. MsrPQ is essential for the maintenance of envelope integrity under bleach stress, rescuing a wide series of structurally unrelated periplasmic proteins from methionine oxidation. The catalytic subunit MsrP is non-stereospecific, being able to reduce both (R-) and (S-) diastereoisomers of methionine sulfoxide. The sequence is that of Protein-methionine-sulfoxide reductase catalytic subunit MsrP from Ralstonia nicotianae (strain ATCC BAA-1114 / GMI1000) (Ralstonia solanacearum).